The sequence spans 118 residues: Small ribosomal subunit protein uS13 (118 aa).

Positions 92–118 are disordered; the sequence is RRSLPVRGQRTKTNARTRKGPRKPIKK.

The protein belongs to the universal ribosomal protein uS13 family. As to quaternary structure, part of the 30S ribosomal subunit. Forms a loose heterodimer with protein S19. Forms two bridges to the 50S subunit in the 70S ribosome.

Located at the top of the head of the 30S subunit, it contacts several helices of the 16S rRNA. In the 70S ribosome it contacts the 23S rRNA (bridge B1a) and protein L5 of the 50S subunit (bridge B1b), connecting the 2 subunits; these bridges are implicated in subunit movement. Contacts the tRNAs in the A and P-sites. The chain is Small ribosomal subunit protein uS13 from Acinetobacter baylyi (strain ATCC 33305 / BD413 / ADP1).